Consider the following 609-residue polypeptide: Aminopeptidase ltah-1.1 (609 aa).

Residues 137–139 and 268–273 each bind substrate; these read QCQ and PFGGME. Histidine 297 provides a ligand contact to Zn(2+). Glutamate 298 serves as the catalytic Proton acceptor. Zn(2+)-binding residues include histidine 301 and glutamate 320. Catalysis depends on tyrosine 387, which acts as the Proton donor. A substrate-binding site is contributed by 564–566; it reads RMK.

Belongs to the peptidase M1 family. Zn(2+) serves as cofactor.

It is found in the cytoplasm. It catalyses the reaction Release of N-terminal Arg and Lys from oligopeptides when P1' is not Pro. Also acts on arylamides of Arg and Lys.. Functionally, aminopeptidase which preferentially removes N-terminal Arg and Lys residues from peptides and proteins. The chain is Aminopeptidase ltah-1.1 from Caenorhabditis elegans.